The chain runs to 152 residues: Phospholipase A2 pkP2 (152 aa).

A signal peptide spans 1–21 (MNPAHLLVLLAVCVSLLGASA). Positions 22 to 27 (IPPLPL) are excised as a propeptide. 7 cysteine pairs are disulfide-bonded: Cys-38/Cys-104, Cys-54/Cys-151, Cys-56/Cys-72, Cys-71/Cys-132, Cys-78/Cys-125, Cys-88/Cys-118, and Cys-111/Cys-123. The Ca(2+) site is built by Tyr-55, Gly-57, and Gly-59. His-75 is a catalytic residue. Position 76 (Asp-76) interacts with Ca(2+). Asp-126 is a catalytic residue.

The protein belongs to the phospholipase A2 family. Group I subfamily. The cofactor is Ca(2+).

The protein localises to the secreted. The enzyme catalyses a 1,2-diacyl-sn-glycero-3-phosphocholine + H2O = a 1-acyl-sn-glycero-3-phosphocholine + a fatty acid + H(+). In terms of biological role, PA2 catalyzes the calcium-dependent hydrolysis of the 2-acyl groups in 3-sn-phosphoglycerides. This Laticauda semifasciata (Black-banded sea krait) protein is Phospholipase A2 pkP2.